Consider the following 287-residue polypeptide: Bifunctional protein FolD (287 aa).

Residues Gly165 to Gly167, Thr190, and Ile231 each bind NADP(+).

Belongs to the tetrahydrofolate dehydrogenase/cyclohydrolase family. In terms of assembly, homodimer.

The catalysed reaction is (6R)-5,10-methylene-5,6,7,8-tetrahydrofolate + NADP(+) = (6R)-5,10-methenyltetrahydrofolate + NADPH. It carries out the reaction (6R)-5,10-methenyltetrahydrofolate + H2O = (6R)-10-formyltetrahydrofolate + H(+). Its pathway is one-carbon metabolism; tetrahydrofolate interconversion. Functionally, catalyzes the oxidation of 5,10-methylenetetrahydrofolate to 5,10-methenyltetrahydrofolate and then the hydrolysis of 5,10-methenyltetrahydrofolate to 10-formyltetrahydrofolate. The chain is Bifunctional protein FolD from Heliobacterium modesticaldum (strain ATCC 51547 / Ice1).